The following is a 551-amino-acid chain: MRWSVLDTVLLTVISFHLIQAPFTKVEESFNIQAIHDILTYSVFDISQYDHLKFPGVVPRTFVGAVIIAMLSRPYLYLSSLIQTSRPTSIDVQLVVRGIVGLTNGLSFIYLKNCLQDMFDEITEKKKEENEDKDIYIYDSAGTWFLLFLIGSFHLMFYSTRTLPNFVMTLPLTNVALGWVLLGRYNAAIFLSALVAIVFRLEVSALSAGIALFSVIFKKISLFDAIKFGIFGLGLGSAISITVDSYFWQEWCLPEVDGFLFNVVAGYASKWGVEPVTAYFTHYLRMMFMPPTVLLLNYFGYKLAPAKLKIVSLASLFHIIVLSFQPHKEWRFIIYAVPSIMLLGATGAAHLWENMKVKKITNVLCLAILPLSIMTSFFISMAFLYISRMNYPGGEALTSFNDMIVEKNITNATVHISIPPCMTGVTLFGELNYGVYGINYDKTENTTLLQEMWPSFDFLITHEPTASQLPFENKTTNHWELVNTTKMFTGFDPTYIKNFVFQERVNVLSLLKQIIFDKTPTVFLKELTANSIVKSDVFFTYKRIKQDEKTD.

At 1–2 (MR) the chain is on the lumenal side. A helical transmembrane segment spans residues 3 to 23 (WSVLDTVLLTVISFHLIQAPF). The Cytoplasmic portion of the chain corresponds to 24 to 61 (TKVEESFNIQAIHDILTYSVFDISQYDHLKFPGVVPRT). The chain crosses the membrane as a helical span at residues 62-82 (FVGAVIIAMLSRPYLYLSSLI). The Lumenal segment spans residues 83–89 (QTSRPTS). Residues 90–110 (IDVQLVVRGIVGLTNGLSFIY) form a helical membrane-spanning segment. The Cytoplasmic segment spans residues 111–136 (LKNCLQDMFDEITEKKKEENEDKDIY). Residues 137 to 157 (IYDSAGTWFLLFLIGSFHLMF) traverse the membrane as a helical segment. Topologically, residues 158 to 178 (YSTRTLPNFVMTLPLTNVALG) are lumenal. A helical membrane pass occupies residues 179–199 (WVLLGRYNAAIFLSALVAIVF). The Cytoplasmic portion of the chain corresponds to 200-202 (RLE). Residues 203–223 (VSALSAGIALFSVIFKKISLF) form a helical membrane-spanning segment. At 224 to 227 (DAIK) the chain is on the lumenal side. A helical transmembrane segment spans residues 228 to 248 (FGIFGLGLGSAISITVDSYFW). At 249–275 (QEWCLPEVDGFLFNVVAGYASKWGVEP) the chain is on the cytoplasmic side. A helical transmembrane segment spans residues 276 to 296 (VTAYFTHYLRMMFMPPTVLLL). Topologically, residues 297-303 (NYFGYKL) are lumenal. A helical transmembrane segment spans residues 304 to 324 (APAKLKIVSLASLFHIIVLSF). Residues 325–331 (QPHKEWR) are Cytoplasmic-facing. A helical transmembrane segment spans residues 332–352 (FIIYAVPSIMLLGATGAAHLW). At 353–365 (ENMKVKKITNVLC) the chain is on the lumenal side. Residues 366–386 (LAILPLSIMTSFFISMAFLYI) form a helical membrane-spanning segment. The Cytoplasmic portion of the chain corresponds to 387 to 417 (SRMNYPGGEALTSFNDMIVEKNITNATVHIS). Residues 418–438 (IPPCMTGVTLFGELNYGVYGI) form a helical membrane-spanning segment. Topologically, residues 439–551 (NYDKTENTTL…KRIKQDEKTD (113 aa)) are lumenal.

Belongs to the glycosyltransferase 22 family.

The protein localises to the endoplasmic reticulum membrane. The catalysed reaction is an alpha-D-Man-(1-&gt;2)-alpha-D-Man-(1-&gt;2)-alpha-D-Man-(1-&gt;3)-[alpha-D-Man-(1-&gt;2)-alpha-D-Man-(1-&gt;3)-alpha-D-Man-(1-&gt;6)]-beta-D-Man-(1-&gt;4)-beta-D-GlcNAc-(1-&gt;4)-alpha-D-GlcNAc-diphospho-di-trans,poly-cis-dolichol + a di-trans,poly-cis-dolichyl beta-D-mannosyl phosphate = an alpha-D-Man-(1-&gt;2)-alpha-D-Man-(1-&gt;2)-alpha-D-Man-(1-&gt;3)-[alpha-D-Man-(1-&gt;2)-alpha-D-Man-(1-&gt;3)-[alpha-D-Man-(1-&gt;6)]-alpha-D-Man-(1-&gt;6)]-beta-D-Man-(1-&gt;4)-beta-D-GlcNAc-(1-&gt;4)-alpha-D-GlcNAc-diphospho-di-trans,poly-cis-dolichol + a di-trans,poly-cis-dolichyl phosphate + H(+). It participates in protein modification; protein glycosylation. In terms of biological role, mannosyltransferase that operates in the biosynthetic pathway of dolichol-linked oligosaccharides, the glycan precursors employed in protein asparagine (N)-glycosylation. The assembly of dolichol-linked oligosaccharides begins on the cytosolic side of the endoplasmic reticulum membrane and finishes in its lumen. The sequential addition of sugars to dolichol pyrophosphate produces dolichol-linked oligosaccharides containing fourteen sugars, including two GlcNAcs, nine mannoses and three glucoses. Once assembled, the oligosaccharide is transferred from the lipid to nascent proteins by oligosaccharyltransferases. In the lumen of the endoplasmic reticulum, adds the eighth mannose residue in an alpha-1,6 linkage onto Man(7)GlcNAc(2)-PP-dolichol to produce Man(8)GlcNAc(2)-PP-dolichol. This Saccharomyces cerevisiae (strain ATCC 204508 / S288c) (Baker's yeast) protein is Dol-P-Man:Man(7)GlcNAc(2)-PP-Dol alpha-1,6-mannosyltransferase (ALG12).